A 366-amino-acid polypeptide reads, in one-letter code: Mitogen-activated protein kinase CPK1 (366 aa).

The 286-residue stretch at K17–E302 folds into the Protein kinase domain. ATP contacts are provided by residues V22–V30 and K45. The active-site Proton acceptor is the D140. The residue at position 181 (T181) is a Phosphothreonine. The TXY signature appears at T181–Y183. Y183 is modified (phosphotyrosine).

The protein belongs to the protein kinase superfamily. CMGC Ser/Thr protein kinase family. MAP kinase subfamily. It depends on Mg(2+) as a cofactor. Post-translationally, dually phosphorylated on Thr-181 and Tyr-183, which activates the enzyme.

It catalyses the reaction L-seryl-[protein] + ATP = O-phospho-L-seryl-[protein] + ADP + H(+). The enzyme catalyses L-threonyl-[protein] + ATP = O-phospho-L-threonyl-[protein] + ADP + H(+). Its activity is regulated as follows. Activated by tyrosine and threonine phosphorylation. Responds to activation by environmental stress by phosphorylating downstream targets. The polypeptide is Mitogen-activated protein kinase CPK1 (CPK1) (Cryptococcus neoformans var. neoformans serotype D (strain B-3501A) (Filobasidiella neoformans)).